The chain runs to 363 residues: Aminomethyltransferase (363 aa).

This sequence belongs to the GcvT family. The glycine cleavage system is composed of four proteins: P, T, L and H.

The enzyme catalyses N(6)-[(R)-S(8)-aminomethyldihydrolipoyl]-L-lysyl-[protein] + (6S)-5,6,7,8-tetrahydrofolate = N(6)-[(R)-dihydrolipoyl]-L-lysyl-[protein] + (6R)-5,10-methylene-5,6,7,8-tetrahydrofolate + NH4(+). In terms of biological role, the glycine cleavage system catalyzes the degradation of glycine. This is Aminomethyltransferase from Staphylococcus saprophyticus subsp. saprophyticus (strain ATCC 15305 / DSM 20229 / NCIMB 8711 / NCTC 7292 / S-41).